The sequence spans 671 residues: Putative glycoside hydrolase BT_3595 (671 aa).

The signal sequence occupies residues 1 to 24 (MITGIISILCYLQCFGTLSASVTA).

This sequence belongs to the glycoside hydrolase-like 3 (GHL3) family.

This Bacteroides thetaiotaomicron (strain ATCC 29148 / DSM 2079 / JCM 5827 / CCUG 10774 / NCTC 10582 / VPI-5482 / E50) protein is Putative glycoside hydrolase BT_3595.